Consider the following 430-residue polypeptide: Tol-Pal system protein TolB (430 aa).

The N-terminal stretch at 1–21 (MKQAFRVALSVLMLFVAVAHA) is a signal peptide.

The protein belongs to the TolB family. In terms of assembly, the Tol-Pal system is composed of five core proteins: the inner membrane proteins TolA, TolQ and TolR, the periplasmic protein TolB and the outer membrane protein Pal. They form a network linking the inner and outer membranes and the peptidoglycan layer.

Its subcellular location is the periplasm. Functionally, part of the Tol-Pal system, which plays a role in outer membrane invagination during cell division and is important for maintaining outer membrane integrity. TolB occupies a key intermediary position in the Tol-Pal system because it communicates directly with both membrane-embedded components, Pal in the outer membrane and TolA in the inner membrane. The polypeptide is Tol-Pal system protein TolB (Erwinia tasmaniensis (strain DSM 17950 / CFBP 7177 / CIP 109463 / NCPPB 4357 / Et1/99)).